Reading from the N-terminus, the 620-residue chain is Chaperone protein HscA homolog (620 aa).

It belongs to the heat shock protein 70 family.

Chaperone involved in the maturation of iron-sulfur cluster-containing proteins. Has a low intrinsic ATPase activity which is markedly stimulated by HscB. The sequence is that of Chaperone protein HscA homolog from Pseudomonas syringae pv. tomato (strain ATCC BAA-871 / DC3000).